Here is a 132-residue protein sequence, read N- to C-terminus: Small ribosomal subunit protein uS8 (132 aa).

This sequence belongs to the universal ribosomal protein uS8 family. Part of the 30S ribosomal subunit. Contacts proteins S5 and S12.

In terms of biological role, one of the primary rRNA binding proteins, it binds directly to 16S rRNA central domain where it helps coordinate assembly of the platform of the 30S subunit. The polypeptide is Small ribosomal subunit protein uS8 (Lysinibacillus sphaericus (strain C3-41)).